Consider the following 205-residue polypeptide: MEKKMNTDLFYLTLKQKRYKRKKNIPLRIRLDKNDLSANTASIKFTDKPYLVANKIIKSLEFNATSLYRCIKKNKLRSENFSVQLSRRLLRTKKTLVLPSHVNITLISNSYDVIHSWFIPALGIKIDCVPGRATHHTFYCDSVGFYYGQCAEICGRYHHHMPIKLCILPFEHFLIWWQHFGLPKLLFTESKNRFETDYGLKKFCW.

6 residues coordinate Cu cation: His-115, Cys-150, Glu-152, Cys-154, His-158, and Met-161. Glu-152 lines the Mg(2+) pocket.

It belongs to the cytochrome c oxidase subunit 2 family. In terms of assembly, component of the cytochrome c oxidase (complex IV, CIV), a multisubunit enzyme composed of a catalytic core of 3 subunits and several supernumerary subunits. The complex exists as a monomer or a dimer and forms supercomplexes (SCs) in the inner mitochondrial membrane with ubiquinol-cytochrome c oxidoreductase (cytochrome b-c1 complex, complex III, CIII). The cofactor is Cu cation.

Its subcellular location is the mitochondrion inner membrane. It carries out the reaction 4 Fe(II)-[cytochrome c] + O2 + 8 H(+)(in) = 4 Fe(III)-[cytochrome c] + 2 H2O + 4 H(+)(out). Functionally, component of the cytochrome c oxidase, the last enzyme in the mitochondrial electron transport chain which drives oxidative phosphorylation. The respiratory chain contains 3 multisubunit complexes succinate dehydrogenase (complex II, CII), ubiquinol-cytochrome c oxidoreductase (cytochrome b-c1 complex, complex III, CIII) and cytochrome c oxidase (complex IV, CIV), that cooperate to transfer electrons derived from NADH and succinate to molecular oxygen, creating an electrochemical gradient over the inner membrane that drives transmembrane transport and the ATP synthase. Cytochrome c oxidase is the component of the respiratory chain that catalyzes the reduction of oxygen to water. Electrons originating from reduced cytochrome c in the intermembrane space (IMS) are transferred via the dinuclear copper A center (CU(A)) of subunit 2 and heme A of subunit 1 to the active site in subunit 1, a binuclear center (BNC) formed by heme A3 and copper B (CU(B)). The BNC reduces molecular oxygen to 2 water molecules using 4 electrons from cytochrome c in the IMS and 4 protons from the mitochondrial matrix. In Paramecium tetraurelia, this protein is Cytochrome c oxidase subunit 2 (COII).